A 117-amino-acid polypeptide reads, in one-letter code: Non-specific lipid-transfer protein Lac s 1 (117 aa).

The signal sequence occupies residues 1-25 (MARMAMMILCVVLTCMVVATPYTEA). 4 cysteine pairs are disulfide-bonded: Cys29-Cys76, Cys39-Cys53, Cys54-Cys99, and Cys74-Cys113.

Belongs to the plant LTP family.

Its function is as follows. Plant non-specific lipid-transfer proteins transfer phospholipids as well as galactolipids across membranes. May play a role in wax or cutin deposition in the cell walls of expanding epidermal cells and certain secretory tissues. In Lactuca sativa (Garden lettuce), this protein is Non-specific lipid-transfer protein Lac s 1.